Reading from the N-terminus, the 181-residue chain is Large ribosomal subunit protein uL10 (181 aa).

Belongs to the universal ribosomal protein uL10 family. In terms of assembly, part of the ribosomal stalk of the 50S ribosomal subunit. The N-terminus interacts with L11 and the large rRNA to form the base of the stalk. The C-terminus forms an elongated spine to which L12 dimers bind in a sequential fashion forming a multimeric L10(L12)X complex.

Functionally, forms part of the ribosomal stalk, playing a central role in the interaction of the ribosome with GTP-bound translation factors. The polypeptide is Large ribosomal subunit protein uL10 (Nostoc sp. (strain PCC 7120 / SAG 25.82 / UTEX 2576)).